We begin with the raw amino-acid sequence, 236 residues long: Lectin alpha chain (236 aa).

Mn(2+) contacts are provided by E8 and D10. Ca(2+) is bound by residues D10, Y12, N14, and D19. Residue Y12 participates in a carbohydrate binding. Residues D19, H24, and S34 each contribute to the Mn(2+) site. Residue 99 to 100 (LY) participates in a carbohydrate binding. D207 serves as a coordination point for Ca(2+). Position 227 (R227) interacts with a carbohydrate.

This sequence belongs to the leguminous lectin family. Equilibrium between homodimer and homotetramer. Oligomerization is pH-dependent with homotetramers forming at pH 6.5 and above. In terms of processing, the beta and gamma chains are produced by partial proteolytic processing of the lectin alpha chain by an asparaginyl endopeptidase. Mixture of 60% alpha lectin and 40% of its beta and gamma proteolytic fragments. In terms of tissue distribution, seed.

Its function is as follows. D-mannose/D-glucose-binding lectin. Has anti-inflammatory activity in rats. Induces histamine release in mast cells from rat. Induces lymphocyte proliferation and IFNG production. The chain is Lectin alpha chain from Cratylia argentea (Cratylia floribunda).